A 168-amino-acid chain; its full sequence is Large ribosomal subunit protein uL10 (168 aa).

The protein belongs to the universal ribosomal protein uL10 family. As to quaternary structure, part of the ribosomal stalk of the 50S ribosomal subunit. The N-terminus interacts with L11 and the large rRNA to form the base of the stalk. The C-terminus forms an elongated spine to which L12 dimers bind in a sequential fashion forming a multimeric L10(L12)X complex.

Functionally, forms part of the ribosomal stalk, playing a central role in the interaction of the ribosome with GTP-bound translation factors. The protein is Large ribosomal subunit protein uL10 of Lacticaseibacillus casei (strain BL23) (Lactobacillus casei).